The following is a 106-amino-acid chain: Large ribosomal subunit protein uL24 (106 aa).

It belongs to the universal ribosomal protein uL24 family. In terms of assembly, part of the 50S ribosomal subunit.

Functionally, one of two assembly initiator proteins, it binds directly to the 5'-end of the 23S rRNA, where it nucleates assembly of the 50S subunit. Its function is as follows. One of the proteins that surrounds the polypeptide exit tunnel on the outside of the subunit. The sequence is that of Large ribosomal subunit protein uL24 from Thermosipho melanesiensis (strain DSM 12029 / CIP 104789 / BI429).